A 310-amino-acid polypeptide reads, in one-letter code: tRNA dimethylallyltransferase 2 (310 aa).

Residue 15–22 (GPTASGKT) participates in ATP binding. A substrate-binding site is contributed by 17 to 22 (TASGKT). Residues 40-43 (DSMQ) form an interaction with substrate tRNA region.

It belongs to the IPP transferase family. Monomer. It depends on Mg(2+) as a cofactor.

It catalyses the reaction adenosine(37) in tRNA + dimethylallyl diphosphate = N(6)-dimethylallyladenosine(37) in tRNA + diphosphate. Functionally, catalyzes the transfer of a dimethylallyl group onto the adenine at position 37 in tRNAs that read codons beginning with uridine, leading to the formation of N6-(dimethylallyl)adenosine (i(6)A). The chain is tRNA dimethylallyltransferase 2 from Geotalea uraniireducens (strain Rf4) (Geobacter uraniireducens).